We begin with the raw amino-acid sequence, 294 residues long: Tetraspanin-15 (294 aa).

Over 1-23 the chain is Cytoplasmic; sequence MPRGDSEQVRYCARFSYLWLKFS. The helical transmembrane segment at 24–44 threads the bilayer; the sequence is LIIYSTVFWLIGGLVLSVGIY. Topologically, residues 45 to 62 are extracellular; it reads AEAERQKYKTLESAFLAP. Residues 63–83 traverse the membrane as a helical segment; the sequence is AIILILLGVVMFIVSFIGVLA. Residues 84-94 are Cytoplasmic-facing; the sequence is SLRDNLCLLQS. The helical transmembrane segment at 95–115 threads the bilayer; the sequence is FMYILGICLVMELIGGIVALI. At 116–235 the chain is on the extracellular side; sequence FRNQTIDFLN…WFMDNYTIMA (120 aa). Residue Asn-118 is glycosylated (N-linked (GlcNAc...) asparagine). Cystine bridges form between Cys-154–Cys-219, Cys-155–Cys-185, Cys-171–Cys-179, and Cys-186–Cys-198. 2 N-linked (GlcNAc...) asparagine glycosylation sites follow: Asn-189 and Asn-230. The helical transmembrane segment at 236-256 threads the bilayer; it reads GLLLGILLPQFLGVLLTLLYI. The Cytoplasmic portion of the chain corresponds to 257–294; it reads TRVEDIILEHSVTDGLLGPGAKSRTDTAGTGCCLCYPD.

It belongs to the tetraspanin (TM4SF) family. In terms of assembly, interacts with ADAM10; the interaction influences ADAM10 substrate specificity, endocytosis and turnover. Post-translationally, palmitoylated.

The protein localises to the cell membrane. The protein resides in the late endosome membrane. Its function is as follows. Part of TspanC8 subgroup, composed of 6 members that interact with the transmembrane metalloprotease ADAM10. This interaction is required for ADAM10 exit from the endoplasmic reticulum and for enzymatic maturation and trafficking to the cell surface as well as substrate specificity. Different TspanC8/ADAM10 complexes have distinct substrates. Promotes ADAM10-mediated cleavage of CDH2. Negatively regulates ligand-induced Notch activity probably by regulating ADAM10 activity. In Mus musculus (Mouse), this protein is Tetraspanin-15 (Tspan15).